The primary structure comprises 156 residues: ATP synthase subunit b (156 aa).

The chain crosses the membrane as a helical span at residues 12 to 32 (IAFAIFVWFCVKYVWPPITAA).

This sequence belongs to the ATPase B chain family. As to quaternary structure, F-type ATPases have 2 components, F(1) - the catalytic core - and F(0) - the membrane proton channel. F(1) has five subunits: alpha(3), beta(3), gamma(1), delta(1), epsilon(1). F(0) has three main subunits: a(1), b(2) and c(10-14). The alpha and beta chains form an alternating ring which encloses part of the gamma chain. F(1) is attached to F(0) by a central stalk formed by the gamma and epsilon chains, while a peripheral stalk is formed by the delta and b chains.

It localises to the cell inner membrane. Its function is as follows. F(1)F(0) ATP synthase produces ATP from ADP in the presence of a proton or sodium gradient. F-type ATPases consist of two structural domains, F(1) containing the extramembraneous catalytic core and F(0) containing the membrane proton channel, linked together by a central stalk and a peripheral stalk. During catalysis, ATP synthesis in the catalytic domain of F(1) is coupled via a rotary mechanism of the central stalk subunits to proton translocation. Functionally, component of the F(0) channel, it forms part of the peripheral stalk, linking F(1) to F(0). This is ATP synthase subunit b from Marinobacter nauticus (strain ATCC 700491 / DSM 11845 / VT8) (Marinobacter aquaeolei).